We begin with the raw amino-acid sequence, 248 residues long: Pulmonary surfactant-associated protein A (248 aa).

Residues 1–20 (MWLCPLALTLTLMAASGAAC) form the signal peptide. In terms of domain architecture, Collagen-like spans 31–100 (GIPGTPGSHG…PGERGPPGLP (70 aa)). The segment at 33 to 100 (PGTPGSHGLP…PGERGPPGLP (68 aa)) is disordered. Over residues 42–51 (PGRDGRDGVK) the composition is skewed to basic and acidic residues. The segment covering 54–65 (PGPPGPMGPPGD) has biased composition (pro residues). A C-type lectin domain is found at 134-247 (IGGKVFSTNG…CLYNRLTICE (114 aa)). Intrachain disulfides connect Cys-155–Cys-246 and Cys-224–Cys-238. The N-linked (GlcNAc...) asparagine glycan is linked to Asn-207. Ca(2+) contacts are provided by Glu-215, Ala-217, Asn-234, and Asp-235.

The protein belongs to the SFTPA family. In terms of assembly, oligomeric complex of 6 set of homotrimers.

It localises to the secreted. It is found in the extracellular space. The protein localises to the extracellular matrix. Its subcellular location is the surface film. Its function is as follows. In presence of calcium ions, it binds to surfactant phospholipids and contributes to lower the surface tension at the air-liquid interface in the alveoli of the mammalian lung and is essential for normal respiration. Enhances the expression of MYO18A/SP-R210 on alveolar macrophages. The sequence is that of Pulmonary surfactant-associated protein A (SFTPA1) from Macaca mulatta (Rhesus macaque).